Reading from the N-terminus, the 425-residue chain is L-lysine 2,3-aminomutase (425 aa).

The 213-residue stretch at 113–325 (HRYPDRVLLL…GLRGHTSGYA (213 aa)) folds into the Radical SAM core domain. [4Fe-4S] cluster is bound by residues Cys127, Cys131, and Cys134. The residue at position 339 (Lys339) is an N6-(pyridoxal phosphate)lysine.

It belongs to the radical SAM superfamily. KamA family. In terms of assembly, homotetramer. [4Fe-4S] cluster serves as cofactor. Requires pyridoxal 5'-phosphate as cofactor.

It catalyses the reaction L-lysine = (3S)-3,6-diaminohexanoate. Its pathway is amino-acid degradation; L-lysine degradation via acetate pathway. Its function is as follows. Catalyzes the interconversion of L-alpha-lysine and L-beta-lysine. The sequence is that of L-lysine 2,3-aminomutase from Fusobacterium nucleatum subsp. nucleatum (strain ATCC 25586 / DSM 15643 / BCRC 10681 / CIP 101130 / JCM 8532 / KCTC 2640 / LMG 13131 / VPI 4355).